The chain runs to 502 residues: Glycerol kinase (502 aa).

Thr-14 is a binding site for ADP. ATP is bound by residues Thr-14, Thr-15, and Ser-16. Thr-14 contributes to the sn-glycerol 3-phosphate binding site. Residue Arg-18 participates in ADP binding. Arg-84, Glu-85, Tyr-136, and Asp-246 together coordinate sn-glycerol 3-phosphate. Positions 84, 85, 136, 246, and 247 each coordinate glycerol. ADP is bound by residues Thr-268 and Gly-311. Residues Thr-268, Gly-311, Gln-315, and Gly-412 each contribute to the ATP site. Gly-412 and Asn-416 together coordinate ADP.

Belongs to the FGGY kinase family. In terms of assembly, homotetramer and homodimer (in equilibrium). Heterodimer with EIIA-Glc. Binds 1 zinc ion per glycerol kinase EIIA-Glc dimer. The zinc ion is important for dimerization.

The enzyme catalyses glycerol + ATP = sn-glycerol 3-phosphate + ADP + H(+). Its pathway is polyol metabolism; glycerol degradation via glycerol kinase pathway; sn-glycerol 3-phosphate from glycerol: step 1/1. With respect to regulation, activity of this regulatory enzyme is affected by several metabolites. Allosterically and non-competitively inhibited by fructose 1,6-bisphosphate (FBP) and unphosphorylated phosphocarrier protein EIIA-Glc (III-Glc), an integral component of the bacterial phosphotransferase (PTS) system. Key enzyme in the regulation of glycerol uptake and metabolism. Catalyzes the phosphorylation of glycerol to yield sn-glycerol 3-phosphate. The chain is Glycerol kinase from Escherichia coli O81 (strain ED1a).